The sequence spans 995 residues: Aconitate hydratase 2, mitochondrial (995 aa).

The N-terminal 83 residues, 1–83 (MYRRATSGVR…PASLRAQARN (83 aa)), are a transit peptide targeting the mitochondrion. Substrate-binding positions include glutamine 187 and 306 to 308 (DSH). The [4Fe-4S] cluster site is built by cysteine 538, cysteine 604, and cysteine 607. Substrate contacts are provided by residues arginine 637, arginine 642, arginine 800, and 881 to 882 (SR).

The protein belongs to the aconitase/IPM isomerase family. As to quaternary structure, monomer. The cofactor is [4Fe-4S] cluster. In terms of tissue distribution, mostly expressed in roots, leaves and flowers, also present in stems, and, at low levels, in seeds.

The protein resides in the mitochondrion. The enzyme catalyses citrate = D-threo-isocitrate. It participates in carbohydrate metabolism; tricarboxylic acid cycle; isocitrate from oxaloacetate: step 2/2. Functionally, catalyzes the isomerization of citrate to isocitrate via cis-aconitate. Contributes to oxidative stress tolerance. Involved in acetate assimilation. This is Aconitate hydratase 2, mitochondrial from Arabidopsis thaliana (Mouse-ear cress).